The following is a 494-amino-acid chain: Glycerol kinase (494 aa).

An ADP-binding site is contributed by Thr-13. Residues Thr-13, Thr-14, and Ser-15 each contribute to the ATP site. Residue Thr-13 coordinates sn-glycerol 3-phosphate. An ADP-binding site is contributed by Arg-17. The sn-glycerol 3-phosphate site is built by Arg-83, Glu-84, Tyr-135, and Asp-244. Residues Arg-83, Glu-84, Tyr-135, Asp-244, and Gln-245 each contribute to the glycerol site. Residues Thr-266 and Gly-309 each contribute to the ADP site. Residues Thr-266, Gly-309, Gln-313, and Gly-410 each contribute to the ATP site. Gly-410 and Asn-414 together coordinate ADP.

This sequence belongs to the FGGY kinase family.

It carries out the reaction glycerol + ATP = sn-glycerol 3-phosphate + ADP + H(+). Its pathway is polyol metabolism; glycerol degradation via glycerol kinase pathway; sn-glycerol 3-phosphate from glycerol: step 1/1. Inhibited by fructose 1,6-bisphosphate (FBP). Its function is as follows. Key enzyme in the regulation of glycerol uptake and metabolism. Catalyzes the phosphorylation of glycerol to yield sn-glycerol 3-phosphate. This is Glycerol kinase from Shewanella baltica (strain OS195).